The sequence spans 131 residues: MATVPTRSGSPRQLTTKQTGDAWEVQARRWLEGKGLRFVAANVNERGGEIDLIMREGWTTVFVEVRYRRSALYGGAAASVTRSKQHKLLQTARLWLARHNGSFDTVDCRFDVVAFTGNEVEWIKDAFNDHS.

Polar residues predominate over residues 1-19 (MATVPTRSGSPRQLTTKQT). The segment at 1–20 (MATVPTRSGSPRQLTTKQTG) is disordered.

The protein belongs to the UPF0102 family.

In Shigella boydii serotype 18 (strain CDC 3083-94 / BS512), this protein is UPF0102 protein YraN.